Consider the following 580-residue polypeptide: M-phase inducer phosphatase 2 (580 aa).

The segment at 1–24 is disordered; it reads MEVPQPEPAPGSALSPAGVCGGAQ. S42 carries the phosphoserine modification. Residues 89–107 are compositionally biased toward low complexity; it reads SLSRRASESSLSSESSESS. Disordered stretches follow at residues 89–117 and 165–196; these read SLSRRASESSLSSESSESSDAGLCMDSPS and NITNSQAPDGRRKSEAGSGAASSSGEDKENDG. S169 carries the post-translational modification Phosphoserine; by MELK. S249 bears the Phosphoserine mark. Position 323 is a phosphoserine; by MELK and MAPK14 (S323). Residues 331-370 form a disordered region; it reads PILKRLERPQDRDTPVQNKRRRSVTPPEEQQEAEEPKARV. Positions 334–344 are enriched in basic and acidic residues; the sequence is KRLERPQDRDT. Residue S353 is modified to Phosphoserine; by AURKA. Phosphoserine; by BRSK1 and MAPK14 is present on S375. Positions 431–538 constitute a Rhodanese domain; it reads IVDKFVIVDC…FFPQHPNFCE (108 aa). S470 carries the post-translational modification Phosphoserine. Residue C487 is part of the active site. Position 563 is a phosphoserine (S563).

This sequence belongs to the MPI phosphatase family. In terms of assembly, interacts with MAPK14 and 14-3-3 proteins. In terms of processing, phosphorylated by BRSK1 in vitro. Phosphorylated by CHEK1, which inhibits the activity of this protein. Phosphorylation at Ser-353 by AURKA might locally participate in the control of the onset of mitosis. Phosphorylation by MELK at Ser-169 promotes localization to the centrosome and the spindle poles during mitosis. Phosphorylation at Ser-323 and Ser-375 by MAPK14 is required for binding to 14-3-3 proteins.

It localises to the cytoplasm. Its subcellular location is the cytoskeleton. The protein resides in the microtubule organizing center. It is found in the centrosome. The protein localises to the spindle pole. It catalyses the reaction O-phospho-L-tyrosyl-[protein] + H2O = L-tyrosyl-[protein] + phosphate. Its activity is regulated as follows. Stimulated by B-type cyclins. Functionally, tyrosine protein phosphatase which functions as a dosage-dependent inducer of mitotic progression. Directly dephosphorylates CDK1 and stimulates its kinase activity. Required for G2/M phases of the cell cycle progression and abscission during cytokinesis in a ECT2-dependent manner. The three isoforms seem to have a different level of activity. The protein is M-phase inducer phosphatase 2 (CDC25B) of Homo sapiens (Human).